The chain runs to 570 residues: MNRAVCQVALENDEREAKNTWRLVFRIAILLLTVMTLAISAAALAYSMEASTPGDLVSIPTAISRAEGKITSALGSNQDVVDRIYKQVALESPLALLNTESIIMNAITSLSYQINGAANNSGCGAPVHDPDYIGGIGKELIVDDTSDVTSFYPSAFQEHLNFIPAPTTGSGCTRIPSFDMSATHCYTHNVIFSGCRDHSHSHQYLALGVLRTSATGRVFFSTLRSINLDDTQNRKSCSVSATPLGCDMLCSKVTETEEEDYNSVIPTSMVHGRLGFDGQYHEKDLDVTTLFGDWVANYPGVGGGSFIDNRVWFPVYGGLKPSSPSDTGQEGRYVIYKRYNDTCPDEQDYQIRMAKSSYKPGRFGGKRVQQAILSIKVSTSLGEDPVLTIPPNTVTLMGAEGRVLTVGTSHFLYQRGSSYFSPALLYPMTVNNNTATLHSPYTFNAFTRPGSVPCQASARCPNSCVTGVYTDPYPLVFHRNHTLRGVFGTMLDDEQARLNLVSAVFDNISRSRITRVSSSRTKAAYTTSTCFKVVKTNKTYCLSIAEISNTLFGEFRIVPLLVEILKDDGV.

The Intravirion segment spans residues 1–26 (MNRAVCQVALENDEREAKNTWRLVFR). A helical transmembrane segment spans residues 27 to 48 (IAILLLTVMTLAISAAALAYSM). Residues 49 to 570 (EASTPGDLVS…LVEILKDDGV (522 aa)) are Virion surface-facing. An N-linked (GlcNAc...) asparagine; by host glycan is attached at Asn119. Residues 124-152 (GAPVHDPDYIGGIGKELIVDDTSDVTSFY) are important for interaction with fusion/F protein. Intrachain disulfides connect Cys172–Cys195, Cys185–Cys246, and Cys237–Cys250. The involved in neuraminidase activity stretch occupies residues 233 to 238 (NRKSCS). Asn340 and Asn432 each carry an N-linked (GlcNAc...) asparagine; by host glycan. 2 disulfides stabilise this stretch: Cys343–Cys460 and Cys454–Cys464. N-linked (GlcNAc...) asparagine; by host glycosylation is found at Asn480, Asn507, and Asn537. A disulfide bridge connects residues Cys530 and Cys541.

This sequence belongs to the paramyxoviruses hemagglutinin-neuraminidase family. As to quaternary structure, homotetramer; composed of disulfide-linked homodimers. Interacts with F protein trimer. Interacts with host CG-1B; this interaction inhibits viral adsorption and replication rather than internalization.

It localises to the virion membrane. The protein resides in the host cell membrane. It carries out the reaction Hydrolysis of alpha-(2-&gt;3)-, alpha-(2-&gt;6)-, alpha-(2-&gt;8)- glycosidic linkages of terminal sialic acid residues in oligosaccharides, glycoproteins, glycolipids, colominic acid and synthetic substrates.. Mediates the viral entry into the host cell together with fusion/F protein. Attaches the virus to sialic acid-containing cell receptors and thereby initiates infection. Binding of HN protein to the receptor induces a conformational change that allows the F protein to trigger virion/cell membranes fusion. Functionally, neuraminidase activity ensures the efficient spread of the virus by dissociating the mature virions from the neuraminic acid containing glycoproteins. The chain is Hemagglutinin-neuraminidase (HN) from Gallus gallus (Chicken).